Here is a 431-residue protein sequence, read N- to C-terminus: 5'-deoxyadenosine deaminase (431 aa).

2 residues coordinate Zn(2+): H65 and H67. Substrate-binding residues include E94 and H185. A Zn(2+)-binding site is contributed by H212. The substrate site is built by E215 and D300. Zn(2+) is bound at residue D300.

It belongs to the metallo-dependent hydrolases superfamily. MTA/SAH deaminase family. In terms of assembly, homotetramer. It depends on Zn(2+) as a cofactor.

It carries out the reaction 5'-deoxyadenosine + H2O + H(+) = 5'-deoxyinosine + NH4(+). It catalyses the reaction S-adenosyl-L-homocysteine + H2O + H(+) = S-inosyl-L-homocysteine + NH4(+). The catalysed reaction is S-methyl-5'-thioadenosine + H2O + H(+) = S-methyl-5'-thioinosine + NH4(+). The enzyme catalyses adenosine + H2O + H(+) = inosine + NH4(+). It functions in the pathway amino-acid biosynthesis; S-adenosyl-L-methionine biosynthesis. Its function is as follows. Catalyzes the deamination of three SAM-derived enzymatic products, namely 5'-deoxyadenosine, S-adenosyl-L-homocysteine, and 5'-methylthioadenosine, to produce the inosine analogs. Can also deaminate adenosine. The preferred substrate for this enzyme is 5'-deoxyadenosine, but all these substrates are efficiently deaminated. Likely functions in a S-adenosyl-L-methionine (SAM) recycling pathway from S-adenosyl-L-homocysteine (SAH) produced from SAM-dependent methylation reactions. May also be involved in the recycling of 5'-deoxyadenosine, whereupon the 5'-deoxyribose moiety of 5'-deoxyinosine is further metabolized to deoxyhexoses used for the biosynthesis of aromatic amino acids in methanogens. The chain is 5'-deoxyadenosine deaminase from Methanopyrus kandleri (strain AV19 / DSM 6324 / JCM 9639 / NBRC 100938).